A 255-amino-acid chain; its full sequence is TIR domain-containing protein (255 aa).

Residues Leu-9 to Leu-185 form the TIR domain. Glu-83 is an active-site residue. 2 helical membrane-spanning segments follow: residues Ala-195 to Pro-215 and Phe-223 to Trp-243. The region spanning Leu-201–Ser-255 is the KASH domain.

As to quaternary structure, forms homomers. Interacts with SUN1, SUN2, SUN3, SUN4 and SUN5.

Its subcellular location is the nucleus membrane. The catalysed reaction is NAD(+) + H2O = ADP-D-ribose + nicotinamide + H(+). Its function is as follows. Could play a role in nuclear morphology, specifically nuclear size. The polypeptide is TIR domain-containing protein (Arabidopsis thaliana (Mouse-ear cress)).